The chain runs to 207 residues: Cytochrome c biogenesis ATP-binding export protein CcmA (207 aa).

Residues 4 to 207 enclose the ABC transporter domain; that stretch reads LEVRELLCER…RISLTQTRAV (204 aa). 36-43 is a binding site for ATP; the sequence is GSNGAGKT.

It belongs to the ABC transporter superfamily. CcmA exporter (TC 3.A.1.107) family. As to quaternary structure, the complex is composed of two ATP-binding proteins (CcmA) and two transmembrane proteins (CcmB).

The protein localises to the cell inner membrane. It carries out the reaction heme b(in) + ATP + H2O = heme b(out) + ADP + phosphate + H(+). Its function is as follows. Part of the ABC transporter complex CcmAB involved in the biogenesis of c-type cytochromes; once thought to export heme, this seems not to be the case, but its exact role is uncertain. Responsible for energy coupling to the transport system. The polypeptide is Cytochrome c biogenesis ATP-binding export protein CcmA (Escherichia coli O157:H7).